The following is a 226-amino-acid chain: PKHD-type hydroxylase Pfl01_0799 (226 aa).

Residues 78-178 enclose the Fe2OG dioxygenase domain; the sequence is KVFPPLLNCY…RYASFFWTQS (101 aa). Positions 96, 98, and 159 each coordinate Fe cation. Arg-169 is a binding site for 2-oxoglutarate.

Fe(2+) is required as a cofactor. L-ascorbate serves as cofactor.

The sequence is that of PKHD-type hydroxylase Pfl01_0799 from Pseudomonas fluorescens (strain Pf0-1).